Reading from the N-terminus, the 439-residue chain is UDP-N-acetylmuramoylalanine--D-glutamate ligase (439 aa).

112 to 118 (GSNGKST) is an ATP binding site.

The protein belongs to the MurCDEF family.

It is found in the cytoplasm. The enzyme catalyses UDP-N-acetyl-alpha-D-muramoyl-L-alanine + D-glutamate + ATP = UDP-N-acetyl-alpha-D-muramoyl-L-alanyl-D-glutamate + ADP + phosphate + H(+). It participates in cell wall biogenesis; peptidoglycan biosynthesis. Cell wall formation. Catalyzes the addition of glutamate to the nucleotide precursor UDP-N-acetylmuramoyl-L-alanine (UMA). This Mannheimia succiniciproducens (strain KCTC 0769BP / MBEL55E) protein is UDP-N-acetylmuramoylalanine--D-glutamate ligase.